A 348-amino-acid polypeptide reads, in one-letter code: Probable protein phosphatase 2C 35 (348 aa).

The segment covering Arg-11 to Pro-24 has biased composition (low complexity). Residues Arg-11 to Gly-40 form a disordered region. Residues Val-52–Ile-342 form the PPM-type phosphatase domain. 4 residues coordinate Mn(2+): Asp-93, Gly-94, Asp-289, and Asp-333.

This sequence belongs to the PP2C family. It depends on Mg(2+) as a cofactor. Mn(2+) serves as cofactor.

The catalysed reaction is O-phospho-L-seryl-[protein] + H2O = L-seryl-[protein] + phosphate. The enzyme catalyses O-phospho-L-threonyl-[protein] + H2O = L-threonyl-[protein] + phosphate. The polypeptide is Probable protein phosphatase 2C 35 (Arabidopsis thaliana (Mouse-ear cress)).